The primary structure comprises 627 residues: 1-deoxy-D-xylulose-5-phosphate synthase (627 aa).

Thiamine diphosphate-binding positions include histidine 72 and 113–115 (GHS). Aspartate 144 contacts Mg(2+). Residues 145 to 146 (GA), asparagine 173, tyrosine 283, and glutamate 366 each bind thiamine diphosphate. Asparagine 173 is a Mg(2+) binding site.

Belongs to the transketolase family. DXPS subfamily. Homodimer. The cofactor is Mg(2+). Requires thiamine diphosphate as cofactor.

It carries out the reaction D-glyceraldehyde 3-phosphate + pyruvate + H(+) = 1-deoxy-D-xylulose 5-phosphate + CO2. It functions in the pathway metabolic intermediate biosynthesis; 1-deoxy-D-xylulose 5-phosphate biosynthesis; 1-deoxy-D-xylulose 5-phosphate from D-glyceraldehyde 3-phosphate and pyruvate: step 1/1. Its function is as follows. Catalyzes the acyloin condensation reaction between C atoms 2 and 3 of pyruvate and glyceraldehyde 3-phosphate to yield 1-deoxy-D-xylulose-5-phosphate (DXP). This is 1-deoxy-D-xylulose-5-phosphate synthase from Macrococcus caseolyticus (strain JCSC5402) (Macrococcoides caseolyticum).